The chain runs to 606 residues: Neutral/alkaline invertase 3, chloroplastic (606 aa).

A chloroplast-targeting transit peptide spans 1-58 (MGIAEVALHSMPGAFAAHSPASNLPLAADAARGRRRRSANSLHSSRALQGPVRFPGLR). Residues 97 to 126 (RVPGQAVGGNGSVNGSAAKPPPQRRKASSV) form a disordered region.

This sequence belongs to the glycosyl hydrolase 100 family.

Its subcellular location is the plastid. It localises to the chloroplast. It catalyses the reaction Hydrolysis of terminal non-reducing beta-D-fructofuranoside residues in beta-D-fructofuranosides.. In terms of biological role, mitochondrial invertase that cleaves sucrose into glucose and fructose. This Oryza sativa subsp. japonica (Rice) protein is Neutral/alkaline invertase 3, chloroplastic.